The primary structure comprises 358 residues: Aminomethyltransferase (358 aa).

Belongs to the GcvT family. As to quaternary structure, the glycine cleavage system is composed of four proteins: P, T, L and H.

The enzyme catalyses N(6)-[(R)-S(8)-aminomethyldihydrolipoyl]-L-lysyl-[protein] + (6S)-5,6,7,8-tetrahydrofolate = N(6)-[(R)-dihydrolipoyl]-L-lysyl-[protein] + (6R)-5,10-methylene-5,6,7,8-tetrahydrofolate + NH4(+). The glycine cleavage system catalyzes the degradation of glycine. This is Aminomethyltransferase from Francisella tularensis subsp. tularensis (strain FSC 198).